We begin with the raw amino-acid sequence, 570 residues long: MSNSKEVKSFLWTQSLRRELSGYCSNIKIQVIKDAQALLHGLDFSEVANVQRLMRKEKRDDSDLKRLRDLNQAVNNLVELKSVQQKNVLRVGTLTSDDLLVLAADLDRLKAKVIRGERPLAAGVYMGNLTAQQLEQRRVLLQMVGMGGGFRAGNTLGDGIVRVWDVRNPELLNNQFGTMPSLTIACMCKQGQADLNDVIQSLSDLGLVYTAKYPNMSDLDKLSQTHPILGIIEPKKSAINISGYNFSLSAAVKAGACLIDGGNMLETIKVTKSNLEGILKAALKVKRSLGMFVSDTPGERNPYENLLYKLCLSGEGWPYIASRTSIVGRAWDNTTVDLSGDVQQNAKPDKGNSNRLAQAQGMPAGLTYSQTMELKDSMLQLDPNAKTWIDIEGRPEDPVEIAIYQPNNGQYIHFYREPTDIKQFKQDSKHSHGIDIQDLFSVQPGLTSAVIESLPKNMVLSCQGADDIRKLLDSQNRRDIKLIDVSMQKDDARKFEDKIWDEYKHLCRMHTGIVTQKKKRGGKEEVTPHCALLDCLMFEAAVIGSPQIPTPRPVLSRDLVFRTGPPRVVL.

The tract at residues 54-241 is binding site for the cap structure m7GTP; the sequence is MRKEKRDDSD…IEPKKSAINI (188 aa). Mn(2+)-binding residues include D390 and E392. The Zn(2+) site is built by E400, C507, H510, and C530. A Mn(2+)-binding site is contributed by D534.

Belongs to the arenaviridae nucleocapsid protein family. In terms of assembly, homomultimerizes to form the nucleocapsid. Binds to viral genomic RNA. Interacts with glycoprotein G2. Interacts with protein Z; this interaction probably directs the encapsidated genome to budding sites. Interacts with protein L; this interaction does not interfere with Z-L interaction. Interacts with host IKBKE (via Protein kinase domain); the interaction inhibits IKBKE kinase activity.

It localises to the virion. It is found in the host cytoplasm. In terms of biological role, encapsidates the genome, protecting it from nucleases. The encapsidated genomic RNA is termed the nucleocapsid (NC). Serves as template for viral transcription and replication. The increased presence of protein N in host cell does not seem to trigger the switch from transcription to replication as observed in other negative strain RNA viruses. Through the interaction with host IKBKE, strongly inhibits the phosphorylation and nuclear translocation of host IRF3, a protein involved in interferon activation pathway, leading to the inhibition of interferon-beta and IRF3-dependent promoters activation. Also encodes a functional 3'-5' exoribonuclease that degrades preferentially dsRNA substrates and thereby participates in the suppression of interferon induction. This Mopeia virus (MOPV) protein is Nucleoprotein.